A 348-amino-acid chain; its full sequence is NADH-ubiquinone oxidoreductase chain 2 (348 aa).

11 consecutive transmembrane segments (helical) span residues 1–21 (MNPYVLMILMSSLGLGTTLTF), 25–45 (HWILAWMGLEINTLAIVPLMA), 60–80 (FLIQAAAAAMILFTSTTNAWI), 99–119 (MFALALKIGLAPMHFWLPEVL), 124–144 (LLTGLILSTWQKLAPMALIIQ), 151–171 (PLILTSLGIASSLIGGWSGLN), 178–197 (ILAYSSIAHMGWMIIVIQYA), 202–224 (LIALGTYIFMTSAAFLTLKVLSA), 239–259 (ILAAIATLVMLSLGGLPPLTG), 274–294 (DLPATATIMALTALLSLFFYL), and 326–346 (LTISVTVTMGLLPLTPAILML).

The protein belongs to the complex I subunit 2 family. As to quaternary structure, core subunit of respiratory chain NADH dehydrogenase (Complex I) which is composed of 45 different subunits.

Its subcellular location is the mitochondrion inner membrane. The enzyme catalyses a ubiquinone + NADH + 5 H(+)(in) = a ubiquinol + NAD(+) + 4 H(+)(out). In terms of biological role, core subunit of the mitochondrial membrane respiratory chain NADH dehydrogenase (Complex I) which catalyzes electron transfer from NADH through the respiratory chain, using ubiquinone as an electron acceptor. Essential for the catalytic activity and assembly of complex I. This Danio rerio (Zebrafish) protein is NADH-ubiquinone oxidoreductase chain 2 (mt-nd2).